The sequence spans 145 residues: Flagellar assembly factor FliW (145 aa).

Belongs to the FliW family. As to quaternary structure, interacts with translational regulator CsrA and flagellin(s).

The protein localises to the cytoplasm. Its function is as follows. Acts as an anti-CsrA protein, binds CsrA and prevents it from repressing translation of its target genes, one of which is flagellin. Binds to flagellin and participates in the assembly of the flagellum. In Thermosipho africanus (strain TCF52B), this protein is Flagellar assembly factor FliW.